The following is a 92-amino-acid chain: DNA-directed RNA polymerase subunit omega (92 aa).

The protein belongs to the RNA polymerase subunit omega family. As to quaternary structure, the RNAP catalytic core consists of 2 alpha, 1 beta, 1 beta' and 1 omega subunit. When a sigma factor is associated with the core the holoenzyme is formed, which can initiate transcription.

It catalyses the reaction RNA(n) + a ribonucleoside 5'-triphosphate = RNA(n+1) + diphosphate. Functionally, promotes RNA polymerase assembly. Latches the N- and C-terminal regions of the beta' subunit thereby facilitating its interaction with the beta and alpha subunits. This Shewanella oneidensis (strain ATCC 700550 / JCM 31522 / CIP 106686 / LMG 19005 / NCIMB 14063 / MR-1) protein is DNA-directed RNA polymerase subunit omega.